Reading from the N-terminus, the 177-residue chain is SPbeta prophage-derived uncharacterized protein YopI (177 aa).

A helical membrane pass occupies residues 11–31 (FEGIIGALLGVIVTLILTHIL).

The protein resides in the cell membrane. The sequence is that of SPbeta prophage-derived uncharacterized protein YopI (yopI) from Bacillus subtilis (strain 168).